We begin with the raw amino-acid sequence, 103 residues long: Cell division protein FtsB (103 aa).

Over 1–3 (MGK) the chain is Cytoplasmic. A helical membrane pass occupies residues 4-21 (LTLLLLAILVWLQYSLWF). At 22-103 (GKNGIHDYTR…RAQSAGQNNR (82 aa)) the chain is on the periplasmic side. The stretch at 31 to 71 (RVNDDVAAQQATNAKLKARNDQLFAEIDDLNGGQEALEERA) forms a coiled coil.

Belongs to the FtsB family. In terms of assembly, part of a complex composed of FtsB, FtsL and FtsQ.

It localises to the cell inner membrane. In terms of biological role, essential cell division protein. May link together the upstream cell division proteins, which are predominantly cytoplasmic, with the downstream cell division proteins, which are predominantly periplasmic. The chain is Cell division protein FtsB from Shigella boydii serotype 18 (strain CDC 3083-94 / BS512).